The following is a 74-amino-acid chain: Alpha-elapitoxin-Aa2d (74 aa).

5 cysteine pairs are disulfide-bonded: Cys-3/Cys-21, Cys-14/Cys-42, Cys-27/Cys-31, Cys-46/Cys-57, and Cys-58/Cys-63.

It belongs to the three-finger toxin family. Long-chain subfamily. Type II alpha-neurotoxin sub-subfamily. In terms of tissue distribution, expressed by the venom gland.

Its subcellular location is the secreted. Its function is as follows. Binds with high affinity to muscular (alpha-1/CHRNA1) and neuronal (alpha-7/CHRNA7) nicotinic acetylcholine receptor (nAChR) and inhibits acetylcholine from binding to the receptor, thereby impairing neuromuscular and neuronal transmission. This chain is Alpha-elapitoxin-Aa2d, found in Acanthophis antarcticus (Common death adder).